The chain runs to 976 residues: Receptor-like protein 14 (976 aa).

The N-terminal stretch at methionine 1–cysteine 26 is a signal peptide. The Extracellular portion of the chain corresponds to cysteine 27–methionine 928. N-linked (GlcNAc...) asparagine glycans are attached at residues asparagine 60, asparagine 75, asparagine 98, asparagine 112, asparagine 151, asparagine 185, and asparagine 200. 17 LRR repeats span residues phenylalanine 105–aspartate 127, leucine 137–alanine 160, threonine 162–asparagine 185, leucine 186–leucine 209, glutamate 210–valine 233, leucine 234–glutamate 258, lysine 260–leucine 283, asparagine 284–serine 306, glutamate 308–asparagine 331, threonine 333–lysine 358, phenylalanine 359–glutamine 381, threonine 382–asparagine 405, proline 407–valine 428, histidine 429–valine 452, proline 454–methionine 477, asparagine 478–glycine 501, and phenylalanine 503–serine 528. Asparagine 331 carries N-linked (GlcNAc...) asparagine glycosylation. Asparagine 416 carries N-linked (GlcNAc...) asparagine glycosylation. 2 N-linked (GlcNAc...) asparagine glycosylation sites follow: asparagine 460 and asparagine 489. The LRR 18; degenerate repeat unit spans residues isoleucine 530–threonine 549. 11 LRR repeats span residues leucine 550–proline 573, serine 575–isoleucine 599, histidine 600–serine 623, tyrosine 625–leucine 645, glutamate 646–glycine 669, methionine 671–leucine 692, threonine 693–histidine 715, leucine 782–aspartate 805, leucine 806–lysine 829, lysine 831–leucine 854, and serine 856–threonine 879. N-linked (GlcNAc...) asparagine glycosylation is present at asparagine 552. An N-linked (GlcNAc...) asparagine glycan is attached at asparagine 633. Asparagine 680 carries N-linked (GlcNAc...) asparagine glycosylation. Asparagine 813, asparagine 826, asparagine 853, asparagine 861, and asparagine 866 each carry an N-linked (GlcNAc...) asparagine glycan. Residues aspartate 897–aspartate 922 are disordered. A compositionally biased stretch (basic and acidic residues) spans arginine 898–aspartate 910. Residues asparagine 911–aspartate 922 are compositionally biased toward acidic residues. The chain crosses the membrane as a helical span at residues valine 929–leucine 949. The Cytoplasmic portion of the chain corresponds to methionine 950–serine 976.

The protein belongs to the RLP family.

It localises to the cell membrane. In Arabidopsis thaliana (Mouse-ear cress), this protein is Receptor-like protein 14.